We begin with the raw amino-acid sequence, 115 residues long: Nucleoid-associated protein Ava_2322 (115 aa).

The protein belongs to the YbaB/EbfC family. Homodimer.

The protein resides in the cytoplasm. The protein localises to the nucleoid. Binds to DNA and alters its conformation. May be involved in regulation of gene expression, nucleoid organization and DNA protection. The protein is Nucleoid-associated protein Ava_2322 of Trichormus variabilis (strain ATCC 29413 / PCC 7937) (Anabaena variabilis).